The chain runs to 129 residues: MARVKRAVNAQKKRRTVLKASKGYRGQRSRLYRKAKEQQLHSLTYAYRDRRARKGEFRKLWISRINAAARANDITYNRLIQGLKAAGVEVDRKNLAEIAVSDAAAFTALVEVAKAALPEDVNAPSGEAA.

It belongs to the bacterial ribosomal protein bL20 family.

Functionally, binds directly to 23S ribosomal RNA and is necessary for the in vitro assembly process of the 50S ribosomal subunit. It is not involved in the protein synthesizing functions of that subunit. The polypeptide is Large ribosomal subunit protein bL20 (Mycobacterium sp. (strain JLS)).